Here is a 312-residue protein sequence, read N- to C-terminus: Putative S-adenosyl-L-methionine-dependent methyltransferase Mjls_0078 (312 aa).

Residues Asp-134 and Asp-163 to Leu-164 contribute to the S-adenosyl-L-methionine site.

The protein belongs to the UPF0677 family.

Exhibits S-adenosyl-L-methionine-dependent methyltransferase activity. This Mycobacterium sp. (strain JLS) protein is Putative S-adenosyl-L-methionine-dependent methyltransferase Mjls_0078.